A 187-amino-acid chain; its full sequence is Troponin I, slow skeletal muscle (187 aa).

Pro-2 carries the N-acetylproline modification. Positions 2-48 are involved in binding TNC; it reads PEVERKSKITASRKLMLKSLMLAKAKECWEQEHEEREAEKVRYLSER. Residue Ser-58 is modified to Phosphoserine. The involved in binding TNC and actin stretch occupies residues 97-118; it reads LKLKVLDLRGKFKRPPLRRVRV.

The protein belongs to the troponin I family. In terms of assembly, binds to actin and tropomyosin.

Functionally, troponin I is the inhibitory subunit of troponin, the thin filament regulatory complex which confers calcium-sensitivity to striated muscle actomyosin ATPase activity. This Mus musculus (Mouse) protein is Troponin I, slow skeletal muscle (Tnni1).